A 571-amino-acid polypeptide reads, in one-letter code: Potassium-transporting ATPase potassium-binding subunit (571 aa).

The next 11 helical transmembrane spans lie at 3-23, 64-84, 135-155, 179-199, 254-274, 284-304, 330-350, 357-376, 421-441, 488-508, and 527-547; these read LIGW…VKPL, LGYG…LYAI, LGLT…AVAL, LYVL…QGMP, LANL…TNVF, GWAI…VTYA, FGIV…CGAV, FTAL…EIIV, MLAI…ATVL, LALG…AIAG, and GGLF…LTFF.

The protein belongs to the KdpA family. In terms of assembly, the system is composed of three essential subunits: KdpA, KdpB and KdpC.

It is found in the cell inner membrane. Part of the high-affinity ATP-driven potassium transport (or Kdp) system, which catalyzes the hydrolysis of ATP coupled with the electrogenic transport of potassium into the cytoplasm. This subunit binds the periplasmic potassium ions and delivers the ions to the membrane domain of KdpB through an intramembrane tunnel. The protein is Potassium-transporting ATPase potassium-binding subunit of Methylorubrum populi (strain ATCC BAA-705 / NCIMB 13946 / BJ001) (Methylobacterium populi).